The chain runs to 651 residues: MQRPLLEQPERLEQRLKDIPTEPGCYLMRDADDRLLYVGKSKTLRSRVRSYFRSSHDLSPRIRLMVRQICEIEFIVTDSEAEALALESNLIKNQQPHFNVLLKDDKKYPYLCITWSEDYPRIFITRRRRFRSPLDRFYGPYVDVGLLRRTLFLVKRVFPLRQRPRPLYPNRTCLNYSIGRCPGVCQEKVSSEDYHQILRKVAMVFQGRSDELRQLLNQQMERYAERLDFESAARIRDQLQGIDQLTADQKMSLPDASVSRDVLAVAQDDHFAAIQLFQMRAGKLVGRLGFAADATDLQAGLILQRVIEEHYSQVDAVEIPPEVLVQHELPQQRLIAEWLSEQRERKVQVLHPQRRQKADLIDLVMRNAEFELGRARQSQEQQALANEDLAQLLELATPPRRIEGYDISHIQGSDAVASQVVFIDGLPAKQHYRRYKIQSSSIQAGHSDDFMAMAEIMRRRFRKWARVKAEGADLDQVRRQSSSSLNMDGLHDWPDVVMIDGGKGQLSAVMEALRELDLHEDLVVCSLAKQREEIFLPEAKQPLESEPDQLGVSLLRRLRDEAHRFAVTFHRQQRGQRMKRSRLSDIPGLGPKRVRDLLAHFQSIDAIQLASVDQLHQAPGVGLSLAKQIRAYFHPQEMDEDNMAMAGEDMA.

One can recognise a GIY-YIG domain in the interval 21–100 (TEPGCYLMRD…IKNQQPHFNV (80 aa)). The 36-residue stretch at 210–245 (DELRQLLNQQMERYAERLDFESAARIRDQLQGIDQL) folds into the UVR domain.

Belongs to the UvrC family. As to quaternary structure, interacts with UvrB in an incision complex.

Its subcellular location is the cytoplasm. Its function is as follows. The UvrABC repair system catalyzes the recognition and processing of DNA lesions. UvrC both incises the 5' and 3' sides of the lesion. The N-terminal half is responsible for the 3' incision and the C-terminal half is responsible for the 5' incision. This Synechococcus sp. (strain CC9311) protein is UvrABC system protein C.